The chain runs to 21 residues: Glucose-1-phosphate adenylyltransferase large subunit (21 aa).

Residues 1-21 (SVTADNASETKVREIGQEKSS) are disordered. Residues 8-21 (SETKVREIGQEKSS) show a composition bias toward basic and acidic residues.

Belongs to the bacterial/plant glucose-1-phosphate adenylyltransferase family. In terms of assembly, heterotetramer.

The protein resides in the plastid. It is found in the chloroplast. It localises to the amyloplast. It carries out the reaction alpha-D-glucose 1-phosphate + ATP + H(+) = ADP-alpha-D-glucose + diphosphate. Its pathway is glycan biosynthesis; starch biosynthesis. Activated by 3'phosphoglycerate, inhibited by orthophosphate. Allosteric regulation. Its function is as follows. This protein plays a role in synthesis of starch. It catalyzes the synthesis of the activated glycosyl donor, ADP-glucose from Glc-1-P and ATP. The polypeptide is Glucose-1-phosphate adenylyltransferase large subunit (Spinacia oleracea (Spinach)).